Reading from the N-terminus, the 137-residue chain is Small ribosomal subunit protein uS12 (137 aa).

2 disordered regions span residues 1 to 21 (MPTINQLVRKPRKSKVEKSDS) and 34 to 57 (VHTKLAAPQKRGVATRVGTMTPKK).

This sequence belongs to the universal ribosomal protein uS12 family. Part of the 30S ribosomal subunit. Contacts proteins S8 and S17. May interact with IF1 in the 30S initiation complex.

With S4 and S5 plays an important role in translational accuracy. In terms of biological role, interacts with and stabilizes bases of the 16S rRNA that are involved in tRNA selection in the A site and with the mRNA backbone. Located at the interface of the 30S and 50S subunits, it traverses the body of the 30S subunit contacting proteins on the other side and probably holding the rRNA structure together. The combined cluster of proteins S8, S12 and S17 appears to hold together the shoulder and platform of the 30S subunit. The chain is Small ribosomal subunit protein uS12 from Streptococcus mutans serotype c (strain ATCC 700610 / UA159).